Consider the following 268-residue polypeptide: Glucosamine-6-phosphate deaminase (268 aa).

Catalysis depends on aspartate 72, which acts as the Proton acceptor; for enolization step. Residue aspartate 141 is the For ring-opening step of the active site. The active-site Proton acceptor; for ring-opening step is histidine 143. Glutamate 148 (for ring-opening step) is an active-site residue.

Belongs to the glucosamine/galactosamine-6-phosphate isomerase family. NagB subfamily. In terms of assembly, homohexamer.

It carries out the reaction alpha-D-glucosamine 6-phosphate + H2O = beta-D-fructose 6-phosphate + NH4(+). It participates in amino-sugar metabolism; N-acetylneuraminate degradation; D-fructose 6-phosphate from N-acetylneuraminate: step 5/5. With respect to regulation, allosterically activated by N-acetylglucosamine 6-phosphate (GlcNAc6P). In terms of biological role, catalyzes the reversible isomerization-deamination of glucosamine 6-phosphate (GlcN6P) to form fructose 6-phosphate (Fru6P) and ammonium ion. This is Glucosamine-6-phosphate deaminase from Histophilus somni (strain 129Pt) (Haemophilus somnus).